A 285-amino-acid chain; its full sequence is uncharacterized protein (285 aa).

A helical transmembrane segment spans residues isoleucine 6–tryptophan 26.

The protein belongs to the membrane fusion protein (MFP) (TC 8.A.1) family.

Its subcellular location is the membrane. This is an uncharacterized protein from Escherichia coli (strain K12).